The sequence spans 196 residues: uncharacterized protein (196 aa).

The chain crosses the membrane as a helical span at residues 11 to 31 (ICGFLLVILTIGGVLGGVYLV).

It localises to the membrane. This is an uncharacterized protein from Mycoplasma genitalium (strain ATCC 33530 / DSM 19775 / NCTC 10195 / G37) (Mycoplasmoides genitalium).